The chain runs to 368 residues: DNA replication and repair protein RecF (368 aa).

30–37 (GKNGTGKT) contacts ATP.

This sequence belongs to the RecF family.

It localises to the cytoplasm. The RecF protein is involved in DNA metabolism; it is required for DNA replication and normal SOS inducibility. RecF binds preferentially to single-stranded, linear DNA. It also seems to bind ATP. In Chloroherpeton thalassium (strain ATCC 35110 / GB-78), this protein is DNA replication and repair protein RecF.